The sequence spans 987 residues: Valine--tRNA ligase (987 aa).

A 'HIGH' region motif is present at residues 45–55 (PNVTGSLHMGH). A 'KMSKS' region motif is present at residues 634–638 (KMSKS). Lys637 contributes to the ATP binding site. The stretch at 917 to 985 (VIDIGAEKAR…LSAALARLSE (69 aa)) forms a coiled coil.

The protein belongs to the class-I aminoacyl-tRNA synthetase family. ValS type 1 subfamily. Monomer.

Its subcellular location is the cytoplasm. It catalyses the reaction tRNA(Val) + L-valine + ATP = L-valyl-tRNA(Val) + AMP + diphosphate. In terms of biological role, catalyzes the attachment of valine to tRNA(Val). As ValRS can inadvertently accommodate and process structurally similar amino acids such as threonine, to avoid such errors, it has a 'posttransfer' editing activity that hydrolyzes mischarged Thr-tRNA(Val) in a tRNA-dependent manner. This Cereibacter sphaeroides (strain ATCC 17029 / ATH 2.4.9) (Rhodobacter sphaeroides) protein is Valine--tRNA ligase.